The primary structure comprises 342 residues: Ferredoxin--NADP reductase (342 aa).

The FAD site is built by C17, D36, Q44, Y49, V89, F124, D289, and T330.

The protein belongs to the ferredoxin--NADP reductase type 2 family. In terms of assembly, homodimer. It depends on FAD as a cofactor.

The enzyme catalyses 2 reduced [2Fe-2S]-[ferredoxin] + NADP(+) + H(+) = 2 oxidized [2Fe-2S]-[ferredoxin] + NADPH. The sequence is that of Ferredoxin--NADP reductase from Bradyrhizobium diazoefficiens (strain JCM 10833 / BCRC 13528 / IAM 13628 / NBRC 14792 / USDA 110).